We begin with the raw amino-acid sequence, 659 residues long: Protein FAM161A (659 aa).

A disordered region spans residues 34–59 (LGERQQQRTASVSPQRLPRTSMGTPA). Residues 96-120 (YVQVEKLKKAHLQNMEQLEKMYDKK) are a coiled coil. 2 disordered regions span residues 165–190 (GSVS…EHSV) and 401–428 (LAPG…PKIS). Positions 408 to 426 (GTKKGKCYKPKEKQKHKPK) are enriched in basic residues. The stretch at 531–557 (AIRKREKQRTKDYMKELEAMEQRVLNK) forms a coiled coil. The tract at residues 594 to 659 (NGQSASVDEH…TDEDHSMEEI (66 aa)) is disordered. The span at 600–616 (VDEHVSVREENNPRAES) shows a compositional bias: basic and acidic residues. Acidic residues predominate over residues 637–650 (PESEEAQEEDAYST).

Belongs to the FAM161 family.

Its subcellular location is the cytoplasm. The protein localises to the cytoskeleton. It localises to the cilium basal body. It is found in the cell projection. The protein resides in the cilium. Its subcellular location is the microtubule organizing center. The protein localises to the centrosome. It localises to the centriole. Functionally, involved in ciliogenesis. The chain is Protein FAM161A (fam161a) from Xenopus tropicalis (Western clawed frog).